A 140-amino-acid chain; its full sequence is Tumor protein D55 (140 aa).

A disordered region spans residues 1–28 (MPHARTETSVGTYESHSTSELEDLTEPE). Residues 7 to 18 (ETSVGTYESHST) show a composition bias toward polar residues. Residues 28–57 (EQRELKTKLTKLEAEIVTLRHVLAAKERRC) are a coiled coil.

This sequence belongs to the TPD52 family. In terms of assembly, interacts with TPD52L2. In terms of tissue distribution, specifically expressed in testis. Expressed at 5.6-fold higher levels in adult testis than in fetal testis.

This chain is Tumor protein D55 (TPD52L3), found in Homo sapiens (Human).